Here is a 373-residue protein sequence, read N- to C-terminus: MLPFLRSELARCQPYHPNPGGTGMAMDILDTNECPYDLPTDLKQTLADRYVEAIASNRYPDGSHTDLKAAIVDYLSEQTAGQWQPGPEHVTVGNGSDELIRSILIATCLGGQGSVLVAEPTFSMYGIVAETLGIPVVRIGRDPQTWEMDLAAAETAITQTEGTPVRLCFVVHPNSPTANPLTEAEKDWLRQVPPQILVVIDEAYFEFSGETLLAELPQHPNWLITRTFSKALRLAAHRVGYGIGDPQLIAALEAIRLPYNLPSVAQLAATLALEARSQLLSAIPRLITERDRLYRKLQVVSQLQVWPSASNFLFLKTQSSSQTAALAAQLKAQGTLVRHTADGLRITIGSPAENERTLAHLQTAITQSLPATV.

An N6-(pyridoxal phosphate)lysine modification is found at Lys-230.

The protein belongs to the class-II pyridoxal-phosphate-dependent aminotransferase family. Histidinol-phosphate aminotransferase subfamily. In terms of assembly, homodimer. It depends on pyridoxal 5'-phosphate as a cofactor.

It catalyses the reaction L-histidinol phosphate + 2-oxoglutarate = 3-(imidazol-4-yl)-2-oxopropyl phosphate + L-glutamate. Its pathway is amino-acid biosynthesis; L-histidine biosynthesis; L-histidine from 5-phospho-alpha-D-ribose 1-diphosphate: step 7/9. This is Histidinol-phosphate aminotransferase from Synechococcus elongatus (strain ATCC 33912 / PCC 7942 / FACHB-805) (Anacystis nidulans R2).